The following is an 85-amino-acid chain: Cell division protein ZapA (85 aa).

The stretch at 60 to 85 (AVNVVHDYLKLKEELERLKGQIKEKD) forms a coiled coil.

The protein belongs to the ZapA family. Type 2 subfamily. In terms of assembly, homodimer. Interacts with FtsZ.

The protein resides in the cytoplasm. Activator of cell division through the inhibition of FtsZ GTPase activity, therefore promoting FtsZ assembly into bundles of protofilaments necessary for the formation of the division Z ring. It is recruited early at mid-cell but it is not essential for cell division. In Bacillus licheniformis (strain ATCC 14580 / DSM 13 / JCM 2505 / CCUG 7422 / NBRC 12200 / NCIMB 9375 / NCTC 10341 / NRRL NRS-1264 / Gibson 46), this protein is Cell division protein ZapA.